Reading from the N-terminus, the 259-residue chain is Probable dihydroorotate dehydrogenase B (NAD(+)), electron transfer subunit (259 aa).

In terms of domain architecture, FAD-binding FR-type spans 1–89 (MLPLNATITQ…RGPFGKGFTL (89 aa)). [2Fe-2S] cluster is bound by residues cysteine 211, cysteine 216, cysteine 219, and cysteine 229.

The protein belongs to the PyrK family. In terms of assembly, heterotetramer of 2 PyrK and 2 PyrD type B subunits. Requires [2Fe-2S] cluster as cofactor. FAD is required as a cofactor.

Its pathway is pyrimidine metabolism; UMP biosynthesis via de novo pathway; orotate from (S)-dihydroorotate (NAD(+) route): step 1/1. Functionally, responsible for channeling the electrons from the oxidation of dihydroorotate from the FMN redox center in the PyrD type B subunit to the ultimate electron acceptor NAD(+). The sequence is that of Probable dihydroorotate dehydrogenase B (NAD(+)), electron transfer subunit from Methanosarcina mazei (strain ATCC BAA-159 / DSM 3647 / Goe1 / Go1 / JCM 11833 / OCM 88) (Methanosarcina frisia).